A 101-amino-acid chain; its full sequence is uncharacterized protein (101 aa).

A signal peptide spans 1-21 (MKLSTCCAALLLALASPAVLA). Residues 79–94 (RTTSGNVSAPAQSSQD) are compositionally biased toward polar residues. Positions 79-101 (RTTSGNVSAPAQSSQDGAPAEPQ) are disordered.

This is an uncharacterized protein from Escherichia coli (strain K12).